Reading from the N-terminus, the 419-residue chain is UDP-N-acetylglucosamine 1-carboxyvinyltransferase (419 aa).

22–23 (KN) lines the phosphoenolpyruvate pocket. Arginine 93 contributes to the UDP-N-acetyl-alpha-D-glucosamine binding site. Catalysis depends on cysteine 117, which acts as the Proton donor. Cysteine 117 carries the 2-(S-cysteinyl)pyruvic acid O-phosphothioketal modification. Positions 307 and 329 each coordinate UDP-N-acetyl-alpha-D-glucosamine.

It belongs to the EPSP synthase family. MurA subfamily.

Its subcellular location is the cytoplasm. The enzyme catalyses phosphoenolpyruvate + UDP-N-acetyl-alpha-D-glucosamine = UDP-N-acetyl-3-O-(1-carboxyvinyl)-alpha-D-glucosamine + phosphate. The protein operates within cell wall biogenesis; peptidoglycan biosynthesis. Its function is as follows. Cell wall formation. Adds enolpyruvyl to UDP-N-acetylglucosamine. The protein is UDP-N-acetylglucosamine 1-carboxyvinyltransferase of Shewanella denitrificans (strain OS217 / ATCC BAA-1090 / DSM 15013).